The sequence spans 468 residues: Chromosomal replication initiator protein DnaA (468 aa).

Positions 1-84 are domain I, interacts with DnaA modulators; it reads MSSSLWLQCL…RFEVGSRRVA (84 aa). Residues 84–131 form a domain II region; that stretch reads AAPKPAPTRTPADVAAESSAPAQLQARKPVHKTWDDDAQVIADINHRS. A compositionally biased stretch (low complexity) spans 85–95; it reads APKPAPTRTPA. The tract at residues 85 to 104 is disordered; that stretch reads APKPAPTRTPADVAAESSAP. The domain III, AAA+ region stretch occupies residues 132 to 348; sequence NVNPKHKFNN…GALNRVIANA (217 aa). ATP is bound by residues Gly176, Gly178, Lys179, and Thr180. A domain IV, binds dsDNA region spans residues 349 to 468; sequence NFTGRPITID…YSNLIRTLSS (120 aa).

This sequence belongs to the DnaA family. In terms of assembly, oligomerizes as a right-handed, spiral filament on DNA at oriC.

Its subcellular location is the cytoplasm. Plays an essential role in the initiation and regulation of chromosomal replication. ATP-DnaA binds to the origin of replication (oriC) to initiate formation of the DNA replication initiation complex once per cell cycle. Binds the DnaA box (a 9 base pair repeat at the origin) and separates the double-stranded (ds)DNA. Forms a right-handed helical filament on oriC DNA; dsDNA binds to the exterior of the filament while single-stranded (ss)DNA is stabiized in the filament's interior. The ATP-DnaA-oriC complex binds and stabilizes one strand of the AT-rich DNA unwinding element (DUE), permitting loading of DNA polymerase. After initiation quickly degrades to an ADP-DnaA complex that is not apt for DNA replication. Binds acidic phospholipids. Functionally, complements a temperature-sensitive E.coli mutant, the DnaA consensus is 5'-TT(A/T)TNCACA-3'. The polypeptide is Chromosomal replication initiator protein DnaA (Vibrio harveyi (Beneckea harveyi)).